The following is a 343-amino-acid chain: Heat-inducible transcription repressor HrcA (343 aa).

It belongs to the HrcA family.

Functionally, negative regulator of class I heat shock genes (grpE-dnaK-dnaJ and groELS operons). Prevents heat-shock induction of these operons. This is Heat-inducible transcription repressor HrcA from Bacillus cytotoxicus (strain DSM 22905 / CIP 110041 / 391-98 / NVH 391-98).